Reading from the N-terminus, the 350-residue chain is GTPase Obg (350 aa).

The Obg domain occupies 1–159 (MKLVDEAEIE…RTLKLELKLL (159 aa)). The tract at residues 126-147 (GNMHFKSSTNRSPRQALPGEPG) is disordered. The OBG-type G domain maps to 160-337 (ADVGLLGFPN…IMSRIMAFFD (178 aa)). Residues 166–173 (GFPNAGKS), 191–195 (FTTLY), 213–216 (DIPG), 287–290 (NKAD), and 318–320 (SAL) contribute to the GTP site. 2 residues coordinate Mg(2+): S173 and T193.

The protein belongs to the TRAFAC class OBG-HflX-like GTPase superfamily. OBG GTPase family. In terms of assembly, monomer. Requires Mg(2+) as cofactor.

Its subcellular location is the cytoplasm. Its function is as follows. An essential GTPase which binds GTP, GDP and possibly (p)ppGpp with moderate affinity, with high nucleotide exchange rates and a fairly low GTP hydrolysis rate. Plays a role in control of the cell cycle, stress response, ribosome biogenesis and in those bacteria that undergo differentiation, in morphogenesis control. In Stenotrophomonas maltophilia (strain K279a), this protein is GTPase Obg.